Here is a 291-residue protein sequence, read N- to C-terminus: 4-hydroxy-tetrahydrodipicolinate synthase (291 aa).

Threonine 45 is a binding site for pyruvate. Tyrosine 133 (proton donor/acceptor) is an active-site residue. The active-site Schiff-base intermediate with substrate is the lysine 161. Isoleucine 203 contacts pyruvate.

The protein belongs to the DapA family. Homotetramer; dimer of dimers.

It localises to the cytoplasm. The catalysed reaction is L-aspartate 4-semialdehyde + pyruvate = (2S,4S)-4-hydroxy-2,3,4,5-tetrahydrodipicolinate + H2O + H(+). It functions in the pathway amino-acid biosynthesis; L-lysine biosynthesis via DAP pathway; (S)-tetrahydrodipicolinate from L-aspartate: step 3/4. Its function is as follows. Catalyzes the condensation of (S)-aspartate-beta-semialdehyde [(S)-ASA] and pyruvate to 4-hydroxy-tetrahydrodipicolinate (HTPA). This Laribacter hongkongensis (strain HLHK9) protein is 4-hydroxy-tetrahydrodipicolinate synthase.